Consider the following 145-residue polypeptide: 3-dehydroquinate dehydratase (145 aa).

Tyrosine 22 serves as the catalytic Proton acceptor. Asparagine 71, histidine 77, and aspartate 84 together coordinate substrate. Histidine 97 (proton donor) is an active-site residue. Substrate contacts are provided by residues 98 to 99 and arginine 108; that span reads IS.

It belongs to the type-II 3-dehydroquinase family. As to quaternary structure, homododecamer.

The enzyme catalyses 3-dehydroquinate = 3-dehydroshikimate + H2O. The protein operates within metabolic intermediate biosynthesis; chorismate biosynthesis; chorismate from D-erythrose 4-phosphate and phosphoenolpyruvate: step 3/7. Catalyzes a trans-dehydration via an enolate intermediate. This chain is 3-dehydroquinate dehydratase, found in Thermotoga neapolitana (strain ATCC 49049 / DSM 4359 / NBRC 107923 / NS-E).